Consider the following 329-residue polypeptide: Trans-1,2-dihydrobenzene-1,2-diol dehydrogenase (329 aa).

This sequence belongs to the Gfo/Idh/MocA family. As to quaternary structure, homodimer. As to expression, lens, liver and small intestine.

It carries out the reaction (1R,2R)-1,2-dihydrobenzene-1,2-diol + NADP(+) = catechol + NADPH + H(+). The enzyme catalyses D-xylose + NADP(+) = D-xylono-1,5-lactone + NADPH + H(+). With respect to regulation, stimulated by various salts. This Oryctolagus cuniculus (Rabbit) protein is Trans-1,2-dihydrobenzene-1,2-diol dehydrogenase (DHDH).